A 346-amino-acid polypeptide reads, in one-letter code: L-threonine 3-dehydrogenase (346 aa).

Position 42 (cysteine 42) interacts with Zn(2+). Active-site charge relay system residues include threonine 44 and histidine 47. Residues histidine 67, glutamate 68, cysteine 97, cysteine 100, cysteine 103, and cysteine 111 each contribute to the Zn(2+) site. Residues isoleucine 179, aspartate 199, arginine 204, 266-268, and 291-292 contribute to the NAD(+) site; these read LSL and IT.

Belongs to the zinc-containing alcohol dehydrogenase family. Homotetramer. Zn(2+) serves as cofactor.

The protein resides in the cytoplasm. It catalyses the reaction L-threonine + NAD(+) = (2S)-2-amino-3-oxobutanoate + NADH + H(+). Its pathway is amino-acid degradation; L-threonine degradation via oxydo-reductase pathway; glycine from L-threonine: step 1/2. In terms of biological role, catalyzes the NAD(+)-dependent oxidation of L-threonine to 2-amino-3-ketobutyrate. In Bacillus licheniformis (strain ATCC 14580 / DSM 13 / JCM 2505 / CCUG 7422 / NBRC 12200 / NCIMB 9375 / NCTC 10341 / NRRL NRS-1264 / Gibson 46), this protein is L-threonine 3-dehydrogenase.